Reading from the N-terminus, the 312-residue chain is Olfactory receptor 2L3 (312 aa).

Residues 1–24 lie on the Extracellular side of the membrane; sequence MENYNQTSTDFILLGFFPPSRIGL. Asn-5 carries an N-linked (GlcNAc...) asparagine glycan. The chain crosses the membrane as a helical span at residues 25 to 48; sequence FLFILIVFIFLMALIGNLSMILLI. The Cytoplasmic segment spans residues 49-56; the sequence is FLDTHLHT. The chain crosses the membrane as a helical span at residues 57–78; it reads PMYFLLSQLSLIDLNYISTIVP. The Extracellular portion of the chain corresponds to 79–99; the sequence is KMASDFLSGNKSISFTGCGIQ. Residue Asn-88 is glycosylated (N-linked (GlcNAc...) asparagine). The cysteines at positions 96 and 188 are disulfide-linked. The helical transmembrane segment at 100–119 threads the bilayer; that stretch reads SFFFSALGGAEALLLASMAY. Residues 120–138 lie on the Cytoplasmic side of the membrane; the sequence is DRYIAICFPLHYPIRMSKR. Residues 139-157 traverse the membrane as a helical segment; it reads MCVLMITGSWIIGSINACA. At 158–194 the chain is on the extracellular side; that stretch reads HTVYVLHIPYCQSRAINHFFCDVPAMVTLACMDTWVY. Residues 195 to 218 traverse the membrane as a helical segment; sequence EGTVFLSTTIFLVFPFIAISCSYG. At 219-235 the chain is on the cytoplasmic side; the sequence is RVLLAVYHMKSAEGRKK. Residues 236 to 258 form a helical membrane-spanning segment; it reads AYLTCSTHLTVVTFYYAPFVYTY. The Extracellular segment spans residues 259–271; that stretch reads LRPRSLRSPTEDK. A helical transmembrane segment spans residues 272-291; that stretch reads VLAVFYTTLTPMLNPIIYSL. The Cytoplasmic portion of the chain corresponds to 292–312; the sequence is RNKEVMGALTRVSQRICSGKM.

It belongs to the G-protein coupled receptor 1 family.

The protein localises to the cell membrane. Odorant receptor. The protein is Olfactory receptor 2L3 (OR2L3) of Homo sapiens (Human).